The following is a 421-amino-acid chain: MLRQILSDMFIDPDLLAELSEEQKQILFYKMREEQIRRWKEREAAMERKESLPVKSRPKKENGKSVHWKLGADKQVWVWVMGEHHLDKPYDVLCDEILAEREHLRAAKDSELRKTQSLELANSLKIKSQNCDLQAMKKTEPQNVTRKAASEEASGQGPRAIPTRKDDKAQTKPVKEKDHEEMKQTEDEKTKQIYKSWKEDSEWQASLRKSKAADEKRRSLAKQAREDYKRLSQRGRSGDGLQNPLTGPQKPRRPPLPPKPQFLQPLGIPPKSLGNQGVIRTEISSAQMDTIRWFKEEQLPFRAGYQKNSDTIAPWFHGILTLKKANELLSTGVPGSFLIRVSEKIKGYALSYLSEEGCKHFLIDASANSYSFLGVDQLQHATLADLVEYHKEEPITSLGKELLLYPCGQQDKLPDYLELFQ.

A phosphoserine mark is found at Ser117 and Ser123. The interval 132 to 271 (DLQAMKKTEP…FLQPLGIPPK (140 aa)) is disordered. Basic and acidic residues-rich tracts occupy residues 163 to 201 (TRKD…KEDS) and 211 to 230 (KAAD…DYKR). Ser232 bears the Phosphoserine mark. The SH2 domain occupies 315 to 407 (WFHGILTLKK…LGKELLLYPC (93 aa)).

As to quaternary structure, interacts with ESR1. In the kidney, expressed only in the glomerulus. Expressed in T-cells, B-cells, macrophages and dendritic cells (at protein level). In adult, highest levels are found in muscle and lung with lower levels in kidney.

The protein localises to the cytoplasm. Its function is as follows. Inhibits estrogen-induced cell proliferation by competing with PLCG for binding to ESR1, blocking the effect of estrogen on PLCG and repressing estrogen-induced proliferation. May play a role in T-cell development and function. The chain is SH2 domain-containing protein 4A (Sh2d4a) from Mus musculus (Mouse).